We begin with the raw amino-acid sequence, 306 residues long: Ornithine carbamoyltransferase (306 aa).

Carbamoyl phosphate is bound by residues 50–53 (STRT), glutamine 77, arginine 101, and 128–131 (HPCQ). Residues asparagine 160, aspartate 224, and 228–229 (SM) contribute to the L-ornithine site. Carbamoyl phosphate is bound by residues 264-265 (CL) and arginine 292.

This sequence belongs to the aspartate/ornithine carbamoyltransferase superfamily. OTCase family.

The protein localises to the cytoplasm. It carries out the reaction carbamoyl phosphate + L-ornithine = L-citrulline + phosphate + H(+). Its pathway is amino-acid biosynthesis; L-arginine biosynthesis; L-arginine from L-ornithine and carbamoyl phosphate: step 1/3. Reversibly catalyzes the transfer of the carbamoyl group from carbamoyl phosphate (CP) to the N(epsilon) atom of ornithine (ORN) to produce L-citrulline. In Mycobacterium leprae (strain TN), this protein is Ornithine carbamoyltransferase.